We begin with the raw amino-acid sequence, 1006 residues long: Probable beta-galactosidase A (1006 aa).

A signal peptide spans 1–18 (MKLLSVCAIALLAAQAAG). Substrate is bound by residues Tyr96, Asn140, Ala141, and Glu142. Residue Asn156 is glycosylated (N-linked (GlcNAc...) asparagine). Asn199 provides a ligand contact to substrate. Glu200 acts as the Proton donor in catalysis. An intrachain disulfide couples Cys205 to Cys206. Tyr260 is a substrate binding site. A disulfide bond links Cys266 and Cys315. Glu298 (nucleophile) is an active-site residue. Tyr364 is a binding site for substrate. N-linked (GlcNAc...) asparagine glycosylation is found at Asn373, Asn402, Asn422, Asn622, Asn760, Asn777, and Asn914.

Belongs to the glycosyl hydrolase 35 family.

The protein resides in the secreted. The enzyme catalyses Hydrolysis of terminal non-reducing beta-D-galactose residues in beta-D-galactosides.. Its function is as follows. Cleaves beta-linked terminal galactosyl residues from gangliosides, glycoproteins, and glycosaminoglycans. In Aspergillus fumigatus (strain ATCC MYA-4609 / CBS 101355 / FGSC A1100 / Af293) (Neosartorya fumigata), this protein is Probable beta-galactosidase A (lacA).